The sequence spans 396 residues: Putative cytochrome P450 YjiB (396 aa).

Residue cysteine 349 participates in heme binding.

It belongs to the cytochrome P450 family. Requires heme as cofactor.

This chain is Putative cytochrome P450 YjiB (yjiB), found in Bacillus subtilis (strain 168).